Reading from the N-terminus, the 214-residue chain is Transcriptional regulatory protein MctR (214 aa).

In terms of domain architecture, Response regulatory spans 8–124; the sequence is RVLLIDNHPL…EIVSAIETVA (117 aa). A 4-aspartylphosphate modification is found at Asp-59. The HTH luxR-type domain maps to 143-208; sequence VEEGSDPLTP…GLIRYALDHG (66 aa). Positions 167 to 186 form a DNA-binding region, H-T-H motif; the sequence is NKEIAETLGITSATAETHRK.

The protein localises to the cytoplasm. Member of the two-component regulatory system MctS/MctR, which activates mctP expression. The sequence is that of Transcriptional regulatory protein MctR from Rhizobium johnstonii (strain DSM 114642 / LMG 32736 / 3841) (Rhizobium leguminosarum bv. viciae).